Here is a 155-residue protein sequence, read N- to C-terminus: Vasotocin-neurophysin VT 2 (155 aa).

The signal sequence occupies residues 1-20 (MSVCAVLLLCVAGLLCLSSA). Cysteines 21 and 26 form a disulfide. G29 bears the Glycine amide mark. 7 disulfides stabilise this stretch: C42-C86, C45-C59, C53-C76, C60-C66, C93-C106, C100-C118, and C107-C112. Residues 119–128 (SEDSESEEPA) show a composition bias toward acidic residues. The segment at 119–139 (SEDSESEEPADQNTLGASPGE) is disordered.

Belongs to the vasopressin/oxytocin family.

The protein resides in the secreted. Vasotocin is an antidiuretic hormone. The polypeptide is Vasotocin-neurophysin VT 2 (Catostomus commersonii (White sucker)).